The sequence spans 440 residues: Adenylosuccinate synthetase (440 aa).

Residues 12–18 and 40–42 each bind GTP; these read GDEGKGK and GHT. The Proton acceptor role is filled by Asp-13. The Mg(2+) site is built by Asp-13 and Gly-40. IMP contacts are provided by residues 13–16, 38–41, Thr-128, Arg-142, Gln-223, Thr-238, and Arg-302; these read DEGK and NAGH. His-41 serves as the catalytic Proton donor. Residue 298 to 304 coordinates substrate; sequence TTTGRPR. Residues Arg-304, 330 to 332, and 412 to 414 contribute to the GTP site; these read KLD and SVG.

The protein belongs to the adenylosuccinate synthetase family. As to quaternary structure, homodimer. Mg(2+) serves as cofactor.

Its subcellular location is the cytoplasm. The enzyme catalyses IMP + L-aspartate + GTP = N(6)-(1,2-dicarboxyethyl)-AMP + GDP + phosphate + 2 H(+). Its pathway is purine metabolism; AMP biosynthesis via de novo pathway; AMP from IMP: step 1/2. Its function is as follows. Plays an important role in the de novo pathway of purine nucleotide biosynthesis. Catalyzes the first committed step in the biosynthesis of AMP from IMP. The sequence is that of Adenylosuccinate synthetase from Gloeobacter violaceus (strain ATCC 29082 / PCC 7421).